A 433-amino-acid chain; its full sequence is Ornithine decarboxylase, chloroplastic (433 aa).

At Lys-96 the chain carries N6-(pyridoxal phosphate)lysine. Pyridoxal 5'-phosphate-binding positions include Ser-228, Gly-266, and Glu-299–Arg-302. Tyr-342 to Asp-343 lines the substrate pocket. Cys-378 (proton donor; shared with dimeric partner) is an active-site residue. A substrate-binding site is contributed by Asp-379. Tyr-407 is a binding site for pyridoxal 5'-phosphate.

Belongs to the Orn/Lys/Arg decarboxylase class-II family. Homodimer. Only the dimer is catalytically active, as the active sites are constructed of residues from both monomers. Pyridoxal 5'-phosphate is required as a cofactor.

It localises to the plastid. The protein localises to the chloroplast. The catalysed reaction is L-ornithine + H(+) = putrescine + CO2. It functions in the pathway alkaloid biosynthesis; nicotine biosynthesis. The protein operates within amine and polyamine biosynthesis; putrescine biosynthesis via L-ornithine pathway; putrescine from L-ornithine: step 1/1. Involved in the biosynthesis of pyridine alkaloid natural products, leading mainly to the production of anabasine, anatabine, nicotine and nornicotine, effective deterrents against herbivores with antiparasitic and pesticide properties (neurotoxins); nornicotine serves as the precursor in the synthesis of the carcinogen compound N'-nitrosonornicotine (NNN). Catalyzes the first and rate-limiting step of polyamine biosynthesis that converts ornithine into putrescine, which is the precursor for the polyamines, spermidine and spermine. Polyamines are essential for cell proliferation and are implicated in cellular processes, ranging from DNA replication to apoptosis. The protein is Ornithine decarboxylase, chloroplastic of Nicotiana glauca (Glaucous tobacco).